The sequence spans 303 residues: Coenzyme PQQ synthesis protein B (303 aa).

The protein belongs to the PqqB family.

The protein operates within cofactor biosynthesis; pyrroloquinoline quinone biosynthesis. May be involved in the transport of PQQ or its precursor to the periplasm. In Pseudomonas putida (strain ATCC 700007 / DSM 6899 / JCM 31910 / BCRC 17059 / LMG 24140 / F1), this protein is Coenzyme PQQ synthesis protein B.